Reading from the N-terminus, the 328-residue chain is Phenylalanine--tRNA ligase alpha subunit (328 aa).

This sequence belongs to the class-II aminoacyl-tRNA synthetase family. Phe-tRNA synthetase alpha subunit type 1 subfamily. Tetramer of two alpha and two beta subunits. Requires Mg(2+) as cofactor.

It localises to the cytoplasm. It catalyses the reaction tRNA(Phe) + L-phenylalanine + ATP = L-phenylalanyl-tRNA(Phe) + AMP + diphosphate + H(+). This Buchnera aphidicola subsp. Baizongia pistaciae (strain Bp) protein is Phenylalanine--tRNA ligase alpha subunit.